A 94-amino-acid polypeptide reads, in one-letter code: Integration host factor subunit beta (94 aa).

The protein belongs to the bacterial histone-like protein family. As to quaternary structure, heterodimer of an alpha and a beta chain.

This protein is one of the two subunits of integration host factor, a specific DNA-binding protein that functions in genetic recombination as well as in transcriptional and translational control. In Vibrio campbellii (strain ATCC BAA-1116), this protein is Integration host factor subunit beta.